We begin with the raw amino-acid sequence, 215 residues long: FGFR1 oncogene partner 2 homolog (215 aa).

2 coiled-coil regions span residues 5–104 (IEKA…MSKY) and 161–185 (KEQE…ITRE). The interval 194–215 (DASESTSLSALVTNSDLSLRKN) is disordered. Residues 197–215 (ESTSLSALVTNSDLSLRKN) are compositionally biased toward polar residues.

This sequence belongs to the SIKE family.

It is found in the cytoplasm. May be involved in wound healing pathway. This Pongo abelii (Sumatran orangutan) protein is FGFR1 oncogene partner 2 homolog (FGFR1OP2).